We begin with the raw amino-acid sequence, 760 residues long: 5-methyltetrahydropteroyltriglutamate--homocysteine methyltransferase (760 aa).

Residues 15–18 and lysine 114 each bind 5-methyltetrahydropteroyltri-L-glutamate; that span reads RELK. L-homocysteine is bound by residues 436–438 and glutamate 489; that span reads IGS. L-methionine is bound by residues 436–438 and glutamate 489; that span reads IGS. 5-methyltetrahydropteroyltri-L-glutamate contacts are provided by residues 520–521 and tryptophan 566; that span reads RC. Aspartate 604 serves as a coordination point for L-homocysteine. Aspartate 604 provides a ligand contact to L-methionine. Glutamate 610 is a 5-methyltetrahydropteroyltri-L-glutamate binding site. The Zn(2+) site is built by histidine 646, cysteine 648, and glutamate 670. The active-site Proton donor is histidine 699. Cysteine 731 provides a ligand contact to Zn(2+).

It belongs to the vitamin-B12 independent methionine synthase family. Zn(2+) is required as a cofactor.

It carries out the reaction 5-methyltetrahydropteroyltri-L-glutamate + L-homocysteine = tetrahydropteroyltri-L-glutamate + L-methionine. Its pathway is amino-acid biosynthesis; L-methionine biosynthesis via de novo pathway; L-methionine from L-homocysteine (MetE route): step 1/1. Catalyzes the transfer of a methyl group from 5-methyltetrahydrofolate to homocysteine resulting in methionine formation. This chain is 5-methyltetrahydropteroyltriglutamate--homocysteine methyltransferase, found in Shewanella oneidensis (strain ATCC 700550 / JCM 31522 / CIP 106686 / LMG 19005 / NCIMB 14063 / MR-1).